The primary structure comprises 296 residues: uncharacterized protein (296 aa).

6 helical membrane passes run 10–29, 36–58, 112–131, 188–210, 241–260, and 273–295; these read FSTL…FSLL, YIVL…YYIL, FFAL…MFVT, ILIF…LYLR, MMYG…SAYF, and MYIS…VTYI.

It localises to the cell membrane. This is an uncharacterized protein from Clostridium acetobutylicum (strain ATCC 824 / DSM 792 / JCM 1419 / IAM 19013 / LMG 5710 / NBRC 13948 / NRRL B-527 / VKM B-1787 / 2291 / W).